The chain runs to 217 residues: MRLRNKPWAVKLVNEHPESVLQNPDPEKKIDWAARFGNDNTIEIEVGSGKGHFITTLAENNPDKNYVALELQTTAAGIILRTKLEKGLDNLQILRGDAADINCFFPENSTNVIYLNFSDPWPKTRHEKRRLTYKSFLAKYQQVLTKDGHIEFKTDNSGLFAYSVQSMNNFGMHFDFVSVDLHHEKPEIVEKNIETEYEHKFAAKGNPIYALHADFEA.

S-adenosyl-L-methionine contacts are provided by glutamate 45, glutamate 70, aspartate 97, and aspartate 119. Aspartate 119 is a catalytic residue. Lysine 123 provides a ligand contact to substrate. The interaction with RNA stretch occupies residues 125–130 (RHEKRR). Residues aspartate 155 and 195-198 (TEYE) each bind substrate.

This sequence belongs to the class I-like SAM-binding methyltransferase superfamily. TrmB family.

It carries out the reaction guanosine(46) in tRNA + S-adenosyl-L-methionine = N(7)-methylguanosine(46) in tRNA + S-adenosyl-L-homocysteine. It functions in the pathway tRNA modification; N(7)-methylguanine-tRNA biosynthesis. Catalyzes the formation of N(7)-methylguanine at position 46 (m7G46) in tRNA. The chain is tRNA (guanine-N(7)-)-methyltransferase from Lactobacillus helveticus (strain DPC 4571).